We begin with the raw amino-acid sequence, 296 residues long: Putative thiosulfate sulfurtransferase SseA (296 aa).

Rhodanese domains lie at 31–138 (GKPG…DTSL) and 168–286 (ILGT…VPIT). Cys-245 serves as the catalytic Cysteine persulfide intermediate. Arg-250 provides a ligand contact to substrate.

It catalyses the reaction thiosulfate + hydrogen cyanide = thiocyanate + sulfite + 2 H(+). The sequence is that of Putative thiosulfate sulfurtransferase SseA (sseA) from Mycobacterium leprae (strain TN).